The following is a 189-amino-acid chain: Copper transport protein CTR2 (189 aa).

Topologically, residues 1–81 (MDDKKTWSTV…VVFEWWHIKT (81 aa)) are cytoplasmic. The helical transmembrane segment at 82–102 (LPGLILSCLAIFGLAYLYEYL) threads the bilayer. Topologically, residues 103 to 142 (KYCVHKRQLSQRVLLPNRSLTKINQADKVSNSILYGLQVG) are vacuolar. The helical transmembrane segment at 143 to 163 (FSFMLMLVFMTYNGWLMLAVV) threads the bilayer. The Cytoplasmic segment spans residues 164–189 (CGAIWGNYSWCTSYSPEIDDSSLACH).

The protein belongs to the copper transporter (Ctr) (TC 1.A.56) family. SLC31A subfamily. As to quaternary structure, homomultimer.

The protein localises to the vacuole membrane. Its function is as follows. Provides bioavailable copper via mobilization of vacuolar copper stores and export to the cytoplasm. The protein is Copper transport protein CTR2 (CTR2) of Saccharomyces cerevisiae (strain ATCC 204508 / S288c) (Baker's yeast).